The sequence spans 550 residues: Chaperonin GroEL (550 aa).

ATP-binding positions include 30 to 33, Lys-51, 87 to 91, Gly-415, and Asp-495; these read TLGP and DGTTT.

Belongs to the chaperonin (HSP60) family. In terms of assembly, forms a cylinder of 14 subunits composed of two heptameric rings stacked back-to-back. Interacts with the co-chaperonin GroES.

The protein localises to the cytoplasm. It carries out the reaction ATP + H2O + a folded polypeptide = ADP + phosphate + an unfolded polypeptide.. In terms of biological role, together with its co-chaperonin GroES, plays an essential role in assisting protein folding. The GroEL-GroES system forms a nano-cage that allows encapsulation of the non-native substrate proteins and provides a physical environment optimized to promote and accelerate protein folding. This Shewanella piezotolerans (strain WP3 / JCM 13877) protein is Chaperonin GroEL.